We begin with the raw amino-acid sequence, 246 residues long: UDP-N-acetyl-D-mannosaminuronic acid transferase (246 aa).

Belongs to the glycosyltransferase 26 family.

It carries out the reaction UDP-N-acetyl-alpha-D-mannosaminouronate + N-acetyl-alpha-D-glucosaminyl-di-trans,octa-cis-undecaprenyl diphosphate = beta-D-ManNAcA-(1-&gt;4)-alpha-D-GlcNAc-di-trans,octa-cis-undecaprenyl diphosphate + UDP + H(+). It participates in bacterial outer membrane biogenesis; enterobacterial common antigen biosynthesis. Its function is as follows. Catalyzes the synthesis of Und-PP-GlcNAc-ManNAcA (Lipid II), the second lipid-linked intermediate involved in enterobacterial common antigen (ECA) synthesis. This is UDP-N-acetyl-D-mannosaminuronic acid transferase from Salmonella paratyphi A (strain ATCC 9150 / SARB42).